Reading from the N-terminus, the 343-residue chain is uncharacterized protein (343 aa).

11 helical membrane-spanning segments follow: residues 13–33 (VILY…SMCG), 44–64 (LWGY…ATLD), 71–91 (MHPV…LFFI), 121–141 (ILLL…LTGL), 148–168 (NASL…YLIF), 177–197 (FLGI…GDFS), 203–223 (VAVT…LDTV), 244–264 (VGGF…ELPL), 269–289 (YALG…YIAI), 296–316 (MVGA…FIIL), and 320–340 (FSIM…ILYW). EamA domains lie at 55–192 (IFFG…YLLT) and 216–340 (FFWS…ILYW).

The protein belongs to the EamA transporter family.

Its subcellular location is the cell membrane. This is an uncharacterized protein from Methanothermobacter thermautotrophicus (strain ATCC 29096 / DSM 1053 / JCM 10044 / NBRC 100330 / Delta H) (Methanobacterium thermoautotrophicum).